The primary structure comprises 106 residues: Defensin-like protein 1 (106 aa).

Positions 1–25 (MARSLCFMAFAVLAMMLFVAYEVQA) are cleaved as a signal peptide. 4 cysteine pairs are disulfide-bonded: Cys29-Cys73, Cys40-Cys60, Cys46-Cys67, and Cys50-Cys69.

This sequence belongs to the DEFL family.

It is found in the secreted. It localises to the vacuole. This is Defensin-like protein 1 (THIO1) from Nicotiana paniculata.